The chain runs to 140 residues: Cytochrome b (140 aa).

The chain crosses the membrane as a helical span at residues 38 to 58 (FFALHFLLPFVLAALVIMHLI). Heme b is bound by residues histidine 42 and histidine 56. Residue histidine 61 participates in a ubiquinone binding. A helical transmembrane segment spans residues 85–105 (FVFKDLVTIFIFFIVLSIFVF).

Belongs to the cytochrome b family. In terms of assembly, fungal cytochrome b-c1 complex contains 10 subunits; 3 respiratory subunits, 2 core proteins and 5 low-molecular weight proteins. Cytochrome b-c1 complex is a homodimer. Heme b is required as a cofactor.

It is found in the mitochondrion inner membrane. Its function is as follows. Component of the ubiquinol-cytochrome c reductase complex (complex III or cytochrome b-c1 complex) that is part of the mitochondrial respiratory chain. The b-c1 complex mediates electron transfer from ubiquinol to cytochrome c. Contributes to the generation of a proton gradient across the mitochondrial membrane that is then used for ATP synthesis. In Aspergillus terreus, this protein is Cytochrome b (cob).